The primary structure comprises 253 residues: 3-dehydroquinate dehydratase (253 aa).

3-dehydroquinate contacts are provided by residues 46-48 and Arg82; that span reads EWR. The active-site Proton donor/acceptor is the His143. Lys170 (schiff-base intermediate with substrate) is an active-site residue. Residues Arg213, Ser232, and Gln236 each coordinate 3-dehydroquinate.

Belongs to the type-I 3-dehydroquinase family. Homodimer.

The catalysed reaction is 3-dehydroquinate = 3-dehydroshikimate + H2O. Its pathway is metabolic intermediate biosynthesis; chorismate biosynthesis; chorismate from D-erythrose 4-phosphate and phosphoenolpyruvate: step 3/7. In terms of biological role, involved in the third step of the chorismate pathway, which leads to the biosynthesis of aromatic amino acids. Catalyzes the cis-dehydration of 3-dehydroquinate (DHQ) and introduces the first double bond of the aromatic ring to yield 3-dehydroshikimate. This is 3-dehydroquinate dehydratase from Bacillus velezensis (strain DSM 23117 / BGSC 10A6 / LMG 26770 / FZB42) (Bacillus amyloliquefaciens subsp. plantarum).